The sequence spans 1201 residues: DNA-directed RNA polymerase subunit beta (1201 aa).

Positions 1165 to 1201 (DALSKFKQQQDEKAADKAAKADAAKPSETTNAQQDNQ) are disordered. Basic and acidic residues predominate over residues 1172 to 1189 (QQQDEKAADKAAKADAAK). Over residues 1191-1201 (SETTNAQQDNQ) the composition is skewed to polar residues.

It belongs to the RNA polymerase beta chain family. In terms of assembly, the RNAP catalytic core consists of 2 alpha, 1 beta, 1 beta' and 1 omega subunit. When a sigma factor is associated with the core the holoenzyme is formed, which can initiate transcription.

The enzyme catalyses RNA(n) + a ribonucleoside 5'-triphosphate = RNA(n+1) + diphosphate. DNA-dependent RNA polymerase catalyzes the transcription of DNA into RNA using the four ribonucleoside triphosphates as substrates. This is DNA-directed RNA polymerase subunit beta from Lactiplantibacillus plantarum (strain ATCC BAA-793 / NCIMB 8826 / WCFS1) (Lactobacillus plantarum).